Reading from the N-terminus, the 253-residue chain is Tryptophan synthase alpha chain (253 aa).

Catalysis depends on proton acceptor residues Glu47 and Asp58.

The protein belongs to the TrpA family. Tetramer of two alpha and two beta chains.

The catalysed reaction is (1S,2R)-1-C-(indol-3-yl)glycerol 3-phosphate + L-serine = D-glyceraldehyde 3-phosphate + L-tryptophan + H2O. It functions in the pathway amino-acid biosynthesis; L-tryptophan biosynthesis; L-tryptophan from chorismate: step 5/5. Its function is as follows. The alpha subunit is responsible for the aldol cleavage of indoleglycerol phosphate to indole and glyceraldehyde 3-phosphate. The sequence is that of Tryptophan synthase alpha chain from Syntrophotalea carbinolica (strain DSM 2380 / NBRC 103641 / GraBd1) (Pelobacter carbinolicus).